Here is a 1407-residue protein sequence, read N- to C-terminus: DNA-directed RNA polymerase subunit beta' (1407 aa).

Zn(2+) contacts are provided by cysteine 70, cysteine 72, cysteine 85, and cysteine 88. Mg(2+) contacts are provided by aspartate 460, aspartate 462, and aspartate 464. Residues cysteine 814, cysteine 889, cysteine 896, and cysteine 899 each coordinate Zn(2+). A disordered region spans residues leucine 1384–glycine 1407. Residues glycine 1386–serine 1399 show a composition bias toward polar residues.

This sequence belongs to the RNA polymerase beta' chain family. As to quaternary structure, the RNAP catalytic core consists of 2 alpha, 1 beta, 1 beta' and 1 omega subunit. When a sigma factor is associated with the core the holoenzyme is formed, which can initiate transcription. The cofactor is Mg(2+). Requires Zn(2+) as cofactor.

It catalyses the reaction RNA(n) + a ribonucleoside 5'-triphosphate = RNA(n+1) + diphosphate. Functionally, DNA-dependent RNA polymerase catalyzes the transcription of DNA into RNA using the four ribonucleoside triphosphates as substrates. The polypeptide is DNA-directed RNA polymerase subunit beta' (Xylella fastidiosa (strain Temecula1 / ATCC 700964)).